The following is a 279-amino-acid chain: tRNA-cytidine(32) 2-sulfurtransferase (279 aa).

Positions 46 to 51 (SGGKDS) match the PP-loop motif motif. [4Fe-4S] cluster is bound by residues Cys121, Cys124, and Cys212.

This sequence belongs to the TtcA family. As to quaternary structure, homodimer. Mg(2+) is required as a cofactor. The cofactor is [4Fe-4S] cluster.

Its subcellular location is the cytoplasm. The catalysed reaction is cytidine(32) in tRNA + S-sulfanyl-L-cysteinyl-[cysteine desulfurase] + AH2 + ATP = 2-thiocytidine(32) in tRNA + L-cysteinyl-[cysteine desulfurase] + A + AMP + diphosphate + H(+). The protein operates within tRNA modification. In terms of biological role, catalyzes the ATP-dependent 2-thiolation of cytidine in position 32 of tRNA, to form 2-thiocytidine (s(2)C32). The sulfur atoms are provided by the cysteine/cysteine desulfurase (IscS) system. This is tRNA-cytidine(32) 2-sulfurtransferase from Marinomonas sp. (strain MWYL1).